We begin with the raw amino-acid sequence, 46 residues long: Photosystem II reaction center protein K (46 aa).

Residues 1-9 (MLTLLNTFA) constitute a propeptide that is removed on maturation. The chain crosses the membrane as a helical span at residues 25–45 (LPLIPLFFFLLVFVWQAAVGF).

It belongs to the PsbK family. As to quaternary structure, PSII is composed of 1 copy each of membrane proteins PsbA, PsbB, PsbC, PsbD, PsbE, PsbF, PsbH, PsbI, PsbJ, PsbK, PsbL, PsbM, PsbT, PsbX, PsbY, Psb30/Ycf12, peripheral proteins PsbO, CyanoQ (PsbQ), PsbU, PsbV and a large number of cofactors. It forms dimeric complexes.

The protein resides in the cellular thylakoid membrane. One of the components of the core complex of photosystem II (PSII). PSII is a light-driven water:plastoquinone oxidoreductase that uses light energy to abstract electrons from H(2)O, generating O(2) and a proton gradient subsequently used for ATP formation. It consists of a core antenna complex that captures photons, and an electron transfer chain that converts photonic excitation into a charge separation. This is Photosystem II reaction center protein K from Prochlorococcus marinus (strain MIT 9515).